The following is a 429-amino-acid chain: 3-phosphoshikimate 1-carboxyvinyltransferase (429 aa).

Positions 23, 24, and 28 each coordinate 3-phosphoshikimate. Lys23 lines the phosphoenolpyruvate pocket. The phosphoenolpyruvate site is built by Gly95 and Arg123. Ser168, Gln170, Asp316, and Lys343 together coordinate 3-phosphoshikimate. Gln170 serves as a coordination point for phosphoenolpyruvate. The Proton acceptor role is filled by Asp316. Phosphoenolpyruvate-binding residues include Arg347 and Arg389.

It belongs to the EPSP synthase family. In terms of assembly, monomer.

It is found in the cytoplasm. It catalyses the reaction 3-phosphoshikimate + phosphoenolpyruvate = 5-O-(1-carboxyvinyl)-3-phosphoshikimate + phosphate. It functions in the pathway metabolic intermediate biosynthesis; chorismate biosynthesis; chorismate from D-erythrose 4-phosphate and phosphoenolpyruvate: step 6/7. Catalyzes the transfer of the enolpyruvyl moiety of phosphoenolpyruvate (PEP) to the 5-hydroxyl of shikimate-3-phosphate (S3P) to produce enolpyruvyl shikimate-3-phosphate and inorganic phosphate. This chain is 3-phosphoshikimate 1-carboxyvinyltransferase, found in Oceanobacillus iheyensis (strain DSM 14371 / CIP 107618 / JCM 11309 / KCTC 3954 / HTE831).